The sequence spans 64 residues: Bacteriocin plantaricin ASM1 (64 aa).

The first 21 residues, 1–21 (MSKLVKTLTVDEISKIQTNGG), serve as a signal peptide directing secretion. The segment at residues 61–64 (SYHC) is a cross-link (lanthionine (Ser-Cys)).

Post-translationally, contains 2 disulfide bonds.

It is found in the secreted. In terms of biological role, bacteriocin with a narrow antibacterial spectrum. Antibacterial activity against the Gram-positive bacteria L.plantarun, L.pentosus, L.curvatus, L.lindneri, L.mesenteroides and E.faecilis. Lacks antibacterial activity against the Gram-positive bacteria L.brevis, L.sakei, L.lactis, P.acidilactici, B.subtilis, B.cereus, L.monocytogenes and S.aureus, and against the Gram-negative bacteria E.coli and S.typhimurium. This chain is Bacteriocin plantaricin ASM1, found in Lactiplantibacillus plantarum (Lactobacillus plantarum).